The sequence spans 433 residues: C4-dicarboxylate transport protein (433 aa).

A run of 8 helical transmembrane segments spans residues 8–28 (ILYVQVLFAICIGILLGHFWP), 44–64 (LIKMIIGPIIFCTVVTGIAGM), 78–98 (LLYFEVVSTFALLIGLGAAHL), 148–168 (GDILQILLVSLFFGAALAVLG), 188–208 (IVHVITKVAPIGAFGAMAFTI), 222–242 (LIGTFYFTAIVFVLVVLGTIA), 307–327 (IYMTMAVIFIAQATGIELTLM), and 355–375 (AATLAVVPTIPVAGMVLILGI).

Belongs to the dicarboxylate/amino acid:cation symporter (DAACS) (TC 2.A.23) family.

The protein resides in the cell inner membrane. Its function is as follows. Responsible for the transport of dicarboxylates such as succinate, fumarate, and malate from the periplasm across the membrane. This chain is C4-dicarboxylate transport protein, found in Cupriavidus taiwanensis (strain DSM 17343 / BCRC 17206 / CCUG 44338 / CIP 107171 / LMG 19424 / R1) (Ralstonia taiwanensis (strain LMG 19424)).